Here is a 355-residue protein sequence, read N- to C-terminus: S-adenosylmethionine:tRNA ribosyltransferase-isomerase (355 aa).

It belongs to the QueA family. Monomer.

Its subcellular location is the cytoplasm. It carries out the reaction 7-aminomethyl-7-carbaguanosine(34) in tRNA + S-adenosyl-L-methionine = epoxyqueuosine(34) in tRNA + adenine + L-methionine + 2 H(+). Its pathway is tRNA modification; tRNA-queuosine biosynthesis. Functionally, transfers and isomerizes the ribose moiety from AdoMet to the 7-aminomethyl group of 7-deazaguanine (preQ1-tRNA) to give epoxyqueuosine (oQ-tRNA). This is S-adenosylmethionine:tRNA ribosyltransferase-isomerase from Photorhabdus laumondii subsp. laumondii (strain DSM 15139 / CIP 105565 / TT01) (Photorhabdus luminescens subsp. laumondii).